A 115-amino-acid chain; its full sequence is MFRIMQKSKIHRATVTDKNLNYEGSITIDYRLMKLADIRENELVQVVNINNGERFETYVIKGEEGSGVIALNGAAARLAEIGDRVIIISYAIYNDDEYKPPKIVKVTEKNEPIEK.

Residue Ser-25 is the Schiff-base intermediate with substrate; via pyruvic acid of the active site. Ser-25 carries the pyruvic acid (Ser) modification. Thr-57 is a substrate binding site. Residue Tyr-58 is the Proton donor of the active site. 73 to 75 (GAA) is a substrate binding site.

Belongs to the PanD family. Heterooctamer of four alpha and four beta subunits. Requires pyruvate as cofactor. In terms of processing, is synthesized initially as an inactive proenzyme, which is activated by self-cleavage at a specific serine bond to produce a beta-subunit with a hydroxyl group at its C-terminus and an alpha-subunit with a pyruvoyl group at its N-terminus.

Its subcellular location is the cytoplasm. The catalysed reaction is L-aspartate + H(+) = beta-alanine + CO2. The protein operates within cofactor biosynthesis; (R)-pantothenate biosynthesis; beta-alanine from L-aspartate: step 1/1. Functionally, catalyzes the pyruvoyl-dependent decarboxylation of aspartate to produce beta-alanine. The protein is Aspartate 1-decarboxylase of Kosmotoga olearia (strain ATCC BAA-1733 / DSM 21960 / TBF 19.5.1).